We begin with the raw amino-acid sequence, 621 residues long: MTDEEPADRDDDSDSTPELELDAVYDAIDAVGRPHLTATEFSRKTDLTPDEARAALERLADDGDIERQDVSEVESVWYPTDIAEVTDRERVVLFPDRREVVVEHPDQFTRAQLSQFARLQDTNRSGGYVYELREEDIWAAPHESLDDLLTTMRDVLGERSPHLEEWVTSQWERARKFRLKTHEDGYVVLEAESDDLMGNVARPKLDDDHLRAPISDSESWVNEDATAEIKRTLYEAGYPVRDDRDLETGDAIEMDLRLRLRDYQQDWVERFTEQGSGVFVGPPGSGKTVAAMGAMAAIGGETLILVPSRELATQWRDELVRHTSLTDDDIGEYHGGEKEIRAVTIATYRTAGMDRHRKLFDQRKWGLIVFDEVHHVPSPIHRRSADLQTKHRLGLTATPTRESDDEEEIFTLIGPPIGTDWGKLFDEGYVAEPEVEIRLVPWGDETEQSEYSSTSGHDRRQAAASNTGKIDEIRYALAENPAAKALVFIEYLDQGEAISEAIDAPFISGETPHARREKLFDEFRRGELTTLVVSRVGDEGIDLPDAELALVASGLGGSRRQGAQRAGRTMRPAGDARMVILATRGTTEEDFVRRQMRHLASKGIRVTETEAEAVEPPAKTE.

The region spanning 268 to 417 (VERFTEQGSG…EIFTLIGPPI (150 aa)) is the Helicase ATP-binding domain. 281 to 288 (GPPGSGKT) is a binding site for ATP. Residues 371 to 374 (DEVH) carry the DEAH box motif. Residues 441-465 (PWGDETEQSEYSSTSGHDRRQAAAS) are disordered. Positions 469–621 (KIDEIRYALA…EAVEPPAKTE (153 aa)) constitute a Helicase C-terminal domain.

Belongs to the helicase family. RAD25/XPB subfamily.

The catalysed reaction is Couples ATP hydrolysis with the unwinding of duplex DNA by translocating in the 3'-5' direction.. The enzyme catalyses ATP + H2O = ADP + phosphate + H(+). This is Putative DNA 3'-5' helicase Rad25 from Haloarcula marismortui (strain ATCC 43049 / DSM 3752 / JCM 8966 / VKM B-1809) (Halobacterium marismortui).